The following is a 273-amino-acid chain: 4-diphosphocytidyl-2-C-methyl-D-erythritol kinase (273 aa).

Lys12 is a catalytic residue. Residue 90-100 coordinates ATP; it reads PVASGIGGGSA. Asp122 is an active-site residue.

The protein belongs to the GHMP kinase family. IspE subfamily.

It carries out the reaction 4-CDP-2-C-methyl-D-erythritol + ATP = 4-CDP-2-C-methyl-D-erythritol 2-phosphate + ADP + H(+). Its pathway is isoprenoid biosynthesis; isopentenyl diphosphate biosynthesis via DXP pathway; isopentenyl diphosphate from 1-deoxy-D-xylulose 5-phosphate: step 3/6. Catalyzes the phosphorylation of the position 2 hydroxy group of 4-diphosphocytidyl-2C-methyl-D-erythritol. This chain is 4-diphosphocytidyl-2-C-methyl-D-erythritol kinase, found in Paracoccus denitrificans (strain Pd 1222).